The primary structure comprises 752 residues: Cytosolic phospholipase A2 (752 aa).

The phospholipid binding stretch occupies residues 1–178; sequence MSFIDPYQHI…MKKLLGPKKS (178 aa). Ser-2 carries the post-translational modification Phosphoserine. In terms of domain architecture, C2 spans 6 to 122; that stretch reads PYQHIIVEHQ…KVGEKKEVPF (117 aa). Positions 40, 41, 43, 65, 93, 94, and 95 each coordinate Ca(2+). The region spanning 140–740 is the PLA2c domain; it reads SCPDLRFSMA…SNVEARKFFN (601 aa). Ser-228 functions as the Nucleophile in the catalytic mechanism. The residue at position 268 (Thr-268) is a Phosphothreonine. The tract at residues 427 to 457 is disordered; it reads KHIVSNDSSDSDDEAQGPKGTENEDAEREYQ. Phosphoserine occurs at positions 434, 435, and 437. Ser-505 is subject to Phosphoserine; by MAPK. Phosphoserine is present on residues Ser-511 and Ser-515. Residue Lys-541 forms a Glycyl lysine isopeptide (Lys-Gly) (interchain with G-Cter in SUMO2) linkage. Asp-549 serves as the catalytic Proton acceptor. Residue Lys-606 forms a Glycyl lysine isopeptide (Lys-Gly) (interchain with G-Cter in SUMO2) linkage. Phosphoserine occurs at positions 727 and 729.

Interacts with KAT5. In terms of processing, phosphorylated at both Ser-505 and Ser-727 in response to mitogenic stimuli. In terms of tissue distribution, in brain tissue, expressed in low levels in olfactory mitral and granule cells, in hippocampal pyramidal cells and in dentate and cerebellar granule cells.

It is found in the cytoplasm. The protein resides in the golgi apparatus membrane. The protein localises to the nucleus envelope. It carries out the reaction a 1,2-diacyl-sn-glycero-3-phosphocholine + H2O = a 1-acyl-sn-glycero-3-phosphocholine + a fatty acid + H(+). The catalysed reaction is a 1-O-alkyl-2-acyl-sn-glycero-3-phosphocholine + H2O = a 1-O-alkyl-sn-glycero-3-phosphocholine + a fatty acid + H(+). It catalyses the reaction a 1-acyl-sn-glycero-3-phosphocholine + H2O = sn-glycerol 3-phosphocholine + a fatty acid + H(+). The enzyme catalyses 1-hexadecanoyl-2-(5Z,8Z,11Z,14Z-eicosatetraenoyl)-sn-glycero-3-phosphocholine + H2O = 1-hexadecanoyl-sn-glycero-3-phosphocholine + (5Z,8Z,11Z,14Z)-eicosatetraenoate + H(+). It carries out the reaction 1,2-di-(5Z,8Z,11Z,14Z-eicosatetraenoyl)-sn-glycero-3-phosphocholine + H2O = 1-(5Z,8Z,11Z,14Z-eicosatetraenoyl)-sn-glycero-3-phosphocholine + (5Z,8Z,11Z,14Z)-eicosatetraenoate + H(+). The catalysed reaction is 1-octadecanoyl-2-(5Z,8Z,11Z,14Z-eicosatetraenoyl)-sn-glycero-3-phosphocholine + H2O = 1-octadecanoyl-sn-glycero-3-phosphocholine + (5Z,8Z,11Z,14Z)-eicosatetraenoate + H(+). It catalyses the reaction 1-hexadecanoyl-2-(9Z,12Z-octadecadienoyl)-sn-glycero-3-phosphocholine + H2O = (9Z,12Z)-octadecadienoate + 1-hexadecanoyl-sn-glycero-3-phosphocholine + H(+). The enzyme catalyses 1-octadecanoyl-2-(9Z,12Z,15Z-octadecatrienoyl)-sn-glycero-3-phosphocholine + H2O = (9Z,12Z,15Z)-octadecatrienoate + 1-octadecanoyl-sn-glycero-3-phosphocholine + H(+). It carries out the reaction 1-(5Z,8Z,11Z,14Z-eicosatetraenoyl)-2-hexadecanoyl-sn-glycero-3-phosphocholine + H2O = 1-(5Z,8Z,11Z,14Z-eicosatetraenoyl)-sn-glycero-3-phosphocholine + hexadecanoate + H(+). The catalysed reaction is 1-O-hexadecyl-2-(5Z,8Z,11Z,14Z)-eicosatetraenoyl-sn-glycero-3-phosphocholine + H2O = 1-O-hexadecyl-sn-glycero-3-phosphocholine + (5Z,8Z,11Z,14Z)-eicosatetraenoate + H(+). It catalyses the reaction 1,2-di-(9Z-octadecenoyl)-sn-glycero-3-phospho-(1'-sn-glycerol) + H2O = 1-(9Z-octadecenoyl)-sn-glycero-3-phospho-(1'-sn-glycerol) + (9Z)-octadecenoate + H(+). The enzyme catalyses 1-octadecanoyl-2-(5Z,8Z,11Z,14Z-eicosatetraenoyl)-sn-glycero-3-phosphate + H2O = 1-octadecanoyl-sn-glycero-3-phosphate + (5Z,8Z,11Z,14Z)-eicosatetraenoate + H(+). It carries out the reaction 1-hexadecanoyl-sn-glycero-3-phosphocholine + H2O = sn-glycerol 3-phosphocholine + hexadecanoate + H(+). The catalysed reaction is 2-(prostaglandin E2)-sn-glycero-3-phosphoethanolamine + H2O = sn-glycero-3-phosphoethanolamine + prostaglandin E2 + H(+). It catalyses the reaction 2-[(15S)-hydroxy-(5Z,8Z,11Z,13E)-eicosatetraenoyl]-sn-glycero-3-phosphocholine + H2O = (15S)-hydroxy-(5Z,8Z,11Z,13E)-eicosatetraenoate + sn-glycerol 3-phosphocholine + H(+). The enzyme catalyses 2-[(15R)-hydroxy-(5Z,8Z,11Z,13E)-eicosatetraenoyl]-sn-glycero-3-phosphocholine + H2O = (15R)-hydroxy-(5Z,8Z,11Z,13E)-eicosatetraenoate + sn-glycerol 3-phosphocholine + H(+). It carries out the reaction 2-(prostaglandin E2)-sn-glycero-3-phosphocholine + H2O = prostaglandin E2 + sn-glycerol 3-phosphocholine + H(+). The catalysed reaction is 2-[(11R)-hydroxy-(5Z,8Z,12E,14Z)-eicosatetraenoyl]-sn-glycero-3-phosphocholine + H2O = (11R)-hydroxy-(5Z,8Z,12E,14Z)-eicosatetraenoate + sn-glycerol 3-phosphocholine + H(+). It catalyses the reaction 1-(5Z,8Z,11Z,14Z-eicosatetraenoyl)-2-O-hexadecyl-sn-glycero-3-phosphocholine + H2O = 2-O-hexadecyl-sn-glycero-3-phosphocholine + (5Z,8Z,11Z,14Z)-eicosatetraenoate + H(+). The enzyme catalyses 1-octadecanoyl-2-(5Z,8Z,11Z,14Z-eicosatetraenoyl)-sn-glycero-3-phosphocholine + glycerol = 1-(5Z,8Z,11Z,14Z-eicosatetraenoyl)-glycerol + 1-octadecanoyl-sn-glycero-3-phosphocholine. It carries out the reaction 1-octadecanoyl-2-(9Z,12Z,15Z-octadecatrienoyl)-sn-glycero-3-phosphocholine + glycerol = 1-(9Z,12Z,15Z-octadecatrienoyl)-glycerol + 1-octadecanoyl-sn-glycero-3-phosphocholine. The protein operates within lipid metabolism; arachidonate metabolism. It participates in membrane lipid metabolism; glycerophospholipid metabolism. Its pathway is lipid metabolism; prostaglandin biosynthesis. It functions in the pathway lipid metabolism; leukotriene B4 biosynthesis. Activated by cytosolic calcium, which is necessary for binding to membrane lipids. Activated by phosphorylation in response to mitogenic stimuli. In terms of biological role, has primarily calcium-dependent phospholipase and lysophospholipase activities, with a major role in membrane lipid remodeling and biosynthesis of lipid mediators of the inflammatory response. Plays an important role in embryo implantation and parturition through its ability to trigger prostanoid production. Preferentially hydrolyzes the ester bond of the fatty acyl group attached at sn-2 position of phospholipids (phospholipase A2 activity). Selectively hydrolyzes sn-2 arachidonoyl group from membrane phospholipids, providing the precursor for eicosanoid biosynthesis via the cyclooxygenase pathway. In an alternative pathway of eicosanoid biosynthesis, hydrolyzes sn-2 fatty acyl chain of eicosanoid lysophopholipids to release free bioactive eicosanoids. Hydrolyzes the ester bond of the fatty acyl group attached at sn-1 position of phospholipids (phospholipase A1 activity) only if an ether linkage rather than an ester linkage is present at the sn-2 position. This hydrolysis is not stereospecific. Has calcium-independent phospholipase A2 and lysophospholipase activities in the presence of phosphoinositides. Has O-acyltransferase activity. Catalyzes the transfer of fatty acyl chains from phospholipids to a primary hydroxyl group of glycerol (sn-1 or sn-3), potentially contributing to monoacylglycerol synthesis. The sequence is that of Cytosolic phospholipase A2 (Pla2g4a) from Rattus norvegicus (Rat).